A 644-amino-acid chain; its full sequence is Ribonuclease R (644 aa).

Positions 211–529 (RINYSHIPFI…LHRLLKELLF (319 aa)) constitute an RNB domain. The region spanning 573–644 (LELLEKEFLG…ITERIKEHVS (72 aa)) is the S1 motif domain.

This sequence belongs to the RNR ribonuclease family. RNase R subfamily.

It localises to the cytoplasm. The catalysed reaction is Exonucleolytic cleavage in the 3'- to 5'-direction to yield nucleoside 5'-phosphates.. Functionally, 3'-5' exoribonuclease that releases 5'-nucleoside monophosphates and is involved in maturation of structured RNAs. The protein is Ribonuclease R of Helicobacter pylori (strain ATCC 700392 / 26695) (Campylobacter pylori).